Reading from the N-terminus, the 259-residue chain is BTB/POZ domain-containing protein KCTD4 (259 aa).

Residues 1–25 are disordered; the sequence is MERKINRREKEKEYEGKHNSLEDTD. The 102-residue stretch at 33 to 134 folds into the BTB domain; the sequence is TLMTLNVGGY…EVKSRWEKEQ (102 aa).

In Homo sapiens (Human), this protein is BTB/POZ domain-containing protein KCTD4 (KCTD4).